Here is a 145-residue protein sequence, read N- to C-terminus: Ribosome-binding factor A (145 aa).

A compositionally biased stretch (basic and acidic residues) spans 122–132 (KVQRDLESAPR). The tract at residues 122–145 (KVQRDLESAPREDDEGEPASSSRD) is disordered.

The protein belongs to the RbfA family. In terms of assembly, monomer. Binds 30S ribosomal subunits, but not 50S ribosomal subunits or 70S ribosomes.

It localises to the cytoplasm. One of several proteins that assist in the late maturation steps of the functional core of the 30S ribosomal subunit. Associates with free 30S ribosomal subunits (but not with 30S subunits that are part of 70S ribosomes or polysomes). Required for efficient processing of 16S rRNA. May interact with the 5'-terminal helix region of 16S rRNA. The protein is Ribosome-binding factor A of Methylorubrum extorquens (strain CM4 / NCIMB 13688) (Methylobacterium extorquens).